A 225-amino-acid chain; its full sequence is Small ribosomal subunit protein mS26 (225 aa).

This sequence belongs to the mitochondrion-specific ribosomal protein mS26 family. Component of the mitochondrial ribosome small subunit (28S) which comprises a 12S rRNA and about 30 distinct proteins.

It is found in the mitochondrion. This Drosophila melanogaster (Fruit fly) protein is Small ribosomal subunit protein mS26 (mRpS26).